The sequence spans 483 residues: Glycogen synthase (483 aa).

Lys18 serves as a coordination point for ADP-alpha-D-glucose.

The protein belongs to the glycosyltransferase 1 family. Bacterial/plant glycogen synthase subfamily.

It carries out the reaction [(1-&gt;4)-alpha-D-glucosyl](n) + ADP-alpha-D-glucose = [(1-&gt;4)-alpha-D-glucosyl](n+1) + ADP + H(+). Its pathway is glycan biosynthesis; glycogen biosynthesis. Functionally, synthesizes alpha-1,4-glucan chains using ADP-glucose. The protein is Glycogen synthase of Methylocella silvestris (strain DSM 15510 / CIP 108128 / LMG 27833 / NCIMB 13906 / BL2).